A 286-amino-acid polypeptide reads, in one-letter code: ATP synthase gamma chain (286 aa).

The protein belongs to the ATPase gamma chain family. In terms of assembly, F-type ATPases have 2 components, CF(1) - the catalytic core - and CF(0) - the membrane proton channel. CF(1) has five subunits: alpha(3), beta(3), gamma(1), delta(1), epsilon(1). CF(0) has three main subunits: a, b and c.

The protein resides in the cell inner membrane. In terms of biological role, produces ATP from ADP in the presence of a proton gradient across the membrane. The gamma chain is believed to be important in regulating ATPase activity and the flow of protons through the CF(0) complex. This Alcanivorax borkumensis (strain ATCC 700651 / DSM 11573 / NCIMB 13689 / SK2) protein is ATP synthase gamma chain.